A 431-amino-acid polypeptide reads, in one-letter code: Enolase (431 aa).

Gln-168 is a (2R)-2-phosphoglycerate binding site. Catalysis depends on Glu-210, which acts as the Proton donor. Residues Asp-247, Glu-291, and Asp-318 each coordinate Mg(2+). Residues Lys-343, Arg-372, Ser-373, and Lys-394 each coordinate (2R)-2-phosphoglycerate. Residue Lys-343 is the Proton acceptor of the active site.

The protein belongs to the enolase family. Component of the RNA degradosome, a multiprotein complex involved in RNA processing and mRNA degradation. The cofactor is Mg(2+).

The protein localises to the cytoplasm. It localises to the secreted. Its subcellular location is the cell surface. It carries out the reaction (2R)-2-phosphoglycerate = phosphoenolpyruvate + H2O. It participates in carbohydrate degradation; glycolysis; pyruvate from D-glyceraldehyde 3-phosphate: step 4/5. Functionally, catalyzes the reversible conversion of 2-phosphoglycerate (2-PG) into phosphoenolpyruvate (PEP). It is essential for the degradation of carbohydrates via glycolysis. The sequence is that of Enolase from Acinetobacter baumannii (strain AYE).